The primary structure comprises 117 residues: Large ribosomal subunit protein bL17 (117 aa).

It belongs to the bacterial ribosomal protein bL17 family. In terms of assembly, part of the 50S ribosomal subunit. Contacts protein L32.

The polypeptide is Large ribosomal subunit protein bL17 (Endomicrobium trichonymphae).